Consider the following 495-residue polypeptide: N-succinylglutamate 5-semialdehyde dehydrogenase (495 aa).

Residue 228–233 (GSYATG) participates in NAD(+) binding. Catalysis depends on residues glutamate 251 and cysteine 285.

The protein belongs to the aldehyde dehydrogenase family. AstD subfamily.

It catalyses the reaction N-succinyl-L-glutamate 5-semialdehyde + NAD(+) + H2O = N-succinyl-L-glutamate + NADH + 2 H(+). It participates in amino-acid degradation; L-arginine degradation via AST pathway; L-glutamate and succinate from L-arginine: step 4/5. Its function is as follows. Catalyzes the NAD-dependent reduction of succinylglutamate semialdehyde into succinylglutamate. In Legionella pneumophila (strain Corby), this protein is N-succinylglutamate 5-semialdehyde dehydrogenase.